Here is a 392-residue protein sequence, read N- to C-terminus: DNA replication and repair protein RecF (392 aa).

Position 30 to 37 (30 to 37) interacts with ATP; that stretch reads GPNAAGKT.

The protein belongs to the RecF family.

Its subcellular location is the cytoplasm. Its function is as follows. The RecF protein is involved in DNA metabolism; it is required for DNA replication and normal SOS inducibility. RecF binds preferentially to single-stranded, linear DNA. It also seems to bind ATP. This chain is DNA replication and repair protein RecF, found in Chloroflexus aurantiacus (strain ATCC 29364 / DSM 637 / Y-400-fl).